Here is a 331-residue protein sequence, read N- to C-terminus: PIN2/TERF1-interacting telomerase inhibitor 1 (331 aa).

Disordered stretches follow at residues 1–28 (MSMLAERRRKQKWAVDPRNTAWSNDDSK), 156–175 (AQDGCSNSTADEADTSLTTT), and 197–331 (SKSQ…KVSR). The region spanning 26–72 (DSKFGQKMLEKMGWSKGKGLGAQEQGATEHIKVKVKNNHLGLGATNN) is the G-patch domain. Residue Ser-233 is modified to Phosphoserine. Residues 236 to 246 (HKAKRHKKKKR) are compositionally biased toward basic residues. Basic and acidic residues predominate over residues 247 to 261 (VEAERGPAAKKRDQV). A telomerase inhibitory domain (TID) region spans residues 254-328 (AAKKRDQVEL…DSAPVKKKKK (75 aa)). Phosphoserine occurs at positions 269, 274, and 277. Positions 291 to 301 (QDDVPKPRKRR) match the TBM motif. Residues 297 to 306 (PRKRRAKKTL) show a composition bias toward basic residues.

It belongs to the PINX1 family. In terms of assembly, interacts with MCRS1, TERT, TERF1, NCL/nucleolin, and the telomerase RNA.

It is found in the nucleus. Its subcellular location is the nucleolus. The protein resides in the chromosome. The protein localises to the telomere. It localises to the centromere. It is found in the kinetochore. Functionally, microtubule-binding protein essential for faithful chromosome segregation. Mediates TRF1 and TERT accumulation in nucleolus and enhances TRF1 binding to telomeres. Inhibits telomerase activity. May inhibit cell proliferation and act as tumor suppressor. The protein is PIN2/TERF1-interacting telomerase inhibitor 1 of Rattus norvegicus (Rat).